The following is an 83-amino-acid chain: Translation initiation factor IF-1 (83 aa).

The region spanning 1 to 72 (MAKEELIEMQ…SKGRITFRHL (72 aa)) is the S1-like domain.

Belongs to the IF-1 family. As to quaternary structure, component of the 30S ribosomal translation pre-initiation complex which assembles on the 30S ribosome in the order IF-2 and IF-3, IF-1 and N-formylmethionyl-tRNA(fMet); mRNA recruitment can occur at any time during PIC assembly.

The protein resides in the cytoplasm. One of the essential components for the initiation of protein synthesis. Stabilizes the binding of IF-2 and IF-3 on the 30S subunit to which N-formylmethionyl-tRNA(fMet) subsequently binds. Helps modulate mRNA selection, yielding the 30S pre-initiation complex (PIC). Upon addition of the 50S ribosomal subunit IF-1, IF-2 and IF-3 are released leaving the mature 70S translation initiation complex. In Verminephrobacter eiseniae (strain EF01-2), this protein is Translation initiation factor IF-1.